The primary structure comprises 165 residues: MVTKWWGQDPPVQLRSQLMLWIMELILWKFQSSVVGSSVVTWKISDVAGPHGDHSCSLQHLEQIIGSVSNYPRYTGSRSCDRGENPVSLSKRIKCTWMLGASGFPPRCPSGRDHSRDHPGKSQVPALELANQLAAWGLWSSVVKSWGFRAGETEAPISALSSAHA.

This is an uncharacterized protein from Homo sapiens (Human).